The following is a 156-amino-acid chain: Small ribosomal subunit protein bS16 (156 aa).

A disordered region spans residues 114 to 156 (ENEPVAEAITPKKKKAAKADEAKAEDTAADAEAPAADAEAADK). Positions 130-139 (AKADEAKAED) are enriched in basic and acidic residues. Residues 143-156 (DAEAPAADAEAADK) are compositionally biased toward low complexity.

The protein belongs to the bacterial ribosomal protein bS16 family.

The chain is Small ribosomal subunit protein bS16 from Rhodococcus erythropolis (strain PR4 / NBRC 100887).